Here is a 225-residue protein sequence, read N- to C-terminus: Ribulose-phosphate 3-epimerase (225 aa).

Substrate is bound at residue S9. Positions 34, 36, and 68 each coordinate a divalent metal cation. The active-site Proton acceptor is the D36. Substrate is bound by residues H68, 144–147 (GFGG), 177–179 (DGG), and 199–200 (GS). Position 177 (D177) interacts with a divalent metal cation. The active-site Proton donor is the D177.

This sequence belongs to the ribulose-phosphate 3-epimerase family. Requires a divalent metal cation as cofactor.

The enzyme catalyses D-ribulose 5-phosphate = D-xylulose 5-phosphate. The protein operates within carbohydrate degradation. Catalyzes the reversible epimerization of D-ribulose 5-phosphate to D-xylulose 5-phosphate. In Escherichia coli O157:H7, this protein is Ribulose-phosphate 3-epimerase.